Reading from the N-terminus, the 590-residue chain is Transcription factor bHLH13 (590 aa).

2 disordered regions span residues 274 to 296 and 385 to 439; these read LQHHQHHQQQQQQPPQQQQHRQF and AASS…EAER. The segment covering 281–293 has biased composition (low complexity); that stretch reads QQQQQQPPQQQQH. The segment covering 416–425 has biased composition (basic residues); the sequence is RPRKRGRRPA. One can recognise a bHLH domain in the interval 429 to 478; sequence AEALNHVEAERQRREKLNQRFYALRSVVPNISKMDKASLLGDAVSYINEL.

As to quaternary structure, homodimer.

It is found in the nucleus. The sequence is that of Transcription factor bHLH13 (BHLH13) from Arabidopsis thaliana (Mouse-ear cress).